The chain runs to 379 residues: Neutral protease 2 homolog TRV_03208 (379 aa).

Positions 1–19 are cleaved as a signal peptide; sequence MKFFTALAAVGALLAPALA. The propeptide occupies 20-187; it reads LPTPASEEAS…DYFSKSLDKR (168 aa). 2 cysteine pairs are disulfide-bonded: cysteine 193–cysteine 263 and cysteine 270–cysteine 288. N-linked (GlcNAc...) asparagine glycosylation is present at asparagine 221. Histidine 312 is a Zn(2+) binding site. Glutamate 313 is a catalytic residue. Zn(2+)-binding residues include histidine 316 and aspartate 327.

The protein belongs to the peptidase M35 family. It depends on Zn(2+) as a cofactor.

It localises to the secreted. It catalyses the reaction Preferential cleavage of bonds with hydrophobic residues in P1'. Also 3-Asn-|-Gln-4 and 8-Gly-|-Ser-9 bonds in insulin B chain.. Functionally, secreted metalloproteinase that allows assimilation of proteinaceous substrates. Shows high activities on basic nuclear substrates such as histone and protamine. May be involved in virulence. This Trichophyton verrucosum (strain HKI 0517) protein is Neutral protease 2 homolog TRV_03208.